The sequence spans 113 residues: Large ribosomal subunit protein bL17 (113 aa).

It belongs to the bacterial ribosomal protein bL17 family. In terms of assembly, part of the 50S ribosomal subunit. Contacts protein L32.

This is Large ribosomal subunit protein bL17 from Clostridium beijerinckii (strain ATCC 51743 / NCIMB 8052) (Clostridium acetobutylicum).